The sequence spans 220 residues: Octanoyltransferase (220 aa).

Positions 29–217 (GRAPEMIWLL…CFEETFGPLP (189 aa)) constitute a BPL/LPL catalytic domain. Substrate contacts are provided by residues 68-75 (RGGQYTYH), 148-150 (AIG), and 161-163 (GLS). Cys179 functions as the Acyl-thioester intermediate in the catalytic mechanism.

The protein belongs to the LipB family.

It localises to the cytoplasm. It catalyses the reaction octanoyl-[ACP] + L-lysyl-[protein] = N(6)-octanoyl-L-lysyl-[protein] + holo-[ACP] + H(+). It functions in the pathway protein modification; protein lipoylation via endogenous pathway; protein N(6)-(lipoyl)lysine from octanoyl-[acyl-carrier-protein]: step 1/2. In terms of biological role, catalyzes the transfer of endogenously produced octanoic acid from octanoyl-acyl-carrier-protein onto the lipoyl domains of lipoate-dependent enzymes. Lipoyl-ACP can also act as a substrate although octanoyl-ACP is likely to be the physiological substrate. The chain is Octanoyltransferase from Dinoroseobacter shibae (strain DSM 16493 / NCIMB 14021 / DFL 12).